A 101-amino-acid polypeptide reads, in one-letter code: Feather keratin Cos1-1/Cos1-3/Cos2-1 (101 aa).

N-acetylserine is present on serine 2.

Belongs to the avian keratin family. The avian keratins (F-ker, S-ker, C-ker and B-ker) are a complex mixture of very similar polypeptides.

The sequence is that of Feather keratin Cos1-1/Cos1-3/Cos2-1 from Columba livia (Rock dove).